The chain runs to 433 residues: Adenylosuccinate synthetase (433 aa).

GTP contacts are provided by residues 11 to 17 and 39 to 41; these read GDEGKGK and GHT. The Proton acceptor role is filled by D12. Residues D12 and G39 each contribute to the Mg(2+) site. IMP contacts are provided by residues 12 to 15, 37 to 40, T134, R148, N230, T245, and R309; these read DEGK and NAGH. H40 serves as the catalytic Proton donor. Residue 305-311 coordinates substrate; it reads VTTGRKR. GTP-binding positions include R311, 337 to 339, and 419 to 421; these read KLD and GTG.

The protein belongs to the adenylosuccinate synthetase family. As to quaternary structure, homodimer. It depends on Mg(2+) as a cofactor.

The protein localises to the cytoplasm. The catalysed reaction is IMP + L-aspartate + GTP = N(6)-(1,2-dicarboxyethyl)-AMP + GDP + phosphate + 2 H(+). It functions in the pathway purine metabolism; AMP biosynthesis via de novo pathway; AMP from IMP: step 1/2. Functionally, plays an important role in the de novo pathway and in the salvage pathway of purine nucleotide biosynthesis. Catalyzes the first committed step in the biosynthesis of AMP from IMP. This chain is Adenylosuccinate synthetase, found in Saccharomyces cerevisiae (strain Lalvin EC1118 / Prise de mousse) (Baker's yeast).